The following is a 562-amino-acid chain: MENIVQKAKEEIKDVVLKALNEAKKEGLLNFESIQDVEVEEPKEKQHGDLATNFAMVMAREAKMAPRKIAEIIASKMNTSGTFIEKVEVAGPGFINFFLNQNFLIETLKLIHKRGKDYGRVNLGKGKKVQVEFVSANPTGPMHMGNARGGAIGDVLASILDYAGYNVSREFYINDAGNQIEKFGYSLEARYLQLLGIDAEVPEGGYHGEDIIDRAKEFLEIHGDKYKDVPSEERRKALIEYGLKKNIEKMKEDLVLYGIEYDVWFSEQSLYDSGEVYKVIEELTEKGYTYEKDGALWFKMTLFGAEKDDVLVRSNGVPTYLASDIAYHKNKFVTRGFDWVINVWGADHHGHVAPMKGAMKALGIDPNRLDVVLMQLVKLIEGGQVVRMSKRTGKMITLRDLIEEVGKDAARFFFNMRSPDSPIEFDLDLAKQQTNENPVFYVQYAHARICSIIRQLEEMGVKIENIEDVDLGLLKEEEEVDLIKKLAYFPEEITIAAKTLAPHRITRYVIDVASLFHSFYNSHRVKGAEENLMKARFALILAVKTVLKNALDILKVTAPERM.

The 'HIGH' region motif lies at 136-146 (ANPTGPMHMGN).

The protein belongs to the class-I aminoacyl-tRNA synthetase family. As to quaternary structure, monomer.

It localises to the cytoplasm. It carries out the reaction tRNA(Arg) + L-arginine + ATP = L-arginyl-tRNA(Arg) + AMP + diphosphate. This is Arginine--tRNA ligase (argS) from Caldanaerobacter subterraneus subsp. tengcongensis (strain DSM 15242 / JCM 11007 / NBRC 100824 / MB4) (Thermoanaerobacter tengcongensis).